Reading from the N-terminus, the 479-residue chain is Catalase A (479 aa).

A compositionally biased stretch (polar residues) spans 1-21 (MSKILTTASGAPVADNQNSRS). The segment at 1 to 25 (MSKILTTASGAPVADNQNSRSAGPR) is disordered. Active-site residues include His-53 and Asn-126. Residue Tyr-336 participates in heme binding. The interval 350–376 (QLPVNAPRCPVNSYQRDGSMATGSYGS) is disordered. Positions 361–376 (NSYQRDGSMATGSYGS) are enriched in polar residues.

Belongs to the catalase family. Heme serves as cofactor.

It catalyses the reaction 2 H2O2 = O2 + 2 H2O. Its activity is regulated as follows. Activated by peroxide. Its function is as follows. The major expressed catalase protein in strain Corvallis in stationary phase. Decomposes hydrogen peroxide into water and oxygen; serves to protect cells from the toxic effects of hydrogen peroxide. The protein is Catalase A (katA) of Pseudomonas putida (Arthrobacter siderocapsulatus).